Here is a 300-residue protein sequence, read N- to C-terminus: 4-hydroxy-tetrahydrodipicolinate synthase (300 aa).

Threonine 45 provides a ligand contact to pyruvate. The active-site Proton donor/acceptor is tyrosine 140. The active-site Schiff-base intermediate with substrate is the lysine 169. Residue isoleucine 210 coordinates pyruvate.

Belongs to the DapA family. In terms of assembly, homotetramer; dimer of dimers.

It localises to the cytoplasm. It carries out the reaction L-aspartate 4-semialdehyde + pyruvate = (2S,4S)-4-hydroxy-2,3,4,5-tetrahydrodipicolinate + H2O + H(+). Its pathway is amino-acid biosynthesis; L-lysine biosynthesis via DAP pathway; (S)-tetrahydrodipicolinate from L-aspartate: step 3/4. Its function is as follows. Catalyzes the condensation of (S)-aspartate-beta-semialdehyde [(S)-ASA] and pyruvate to 4-hydroxy-tetrahydrodipicolinate (HTPA). The sequence is that of 4-hydroxy-tetrahydrodipicolinate synthase from Helicobacter pylori (strain G27).